Here is a 521-residue protein sequence, read N- to C-terminus: Fucosyltransferase 3 (521 aa).

A compositionally biased stretch (basic and acidic residues) spans 1-12; it reads MKRGKKNSDAGD. A disordered region spans residues 1–29; sequence MKRGKKNSDAGDRLTNSDTRTGSSELNAM. Residues 1–39 lie on the Cytoplasmic side of the membrane; it reads MKRGKKNSDAGDRLTNSDTRTGSSELNAMMKPSLSSMKT. A compositionally biased stretch (polar residues) spans 14–26; it reads LTNSDTRTGSSEL. Residues 40–60 traverse the membrane as a helical; Signal-anchor for type II membrane protein segment; the sequence is MGLLLAVLMVASVMFSLSVVL. At 61–521 the chain is on the lumenal side; sequence RDPPSDDVIE…QATLFHGCKD (461 aa). Asparagine 152, asparagine 222, and asparagine 493 each carry an N-linked (GlcNAc...) asparagine glycan.

Belongs to the glycosyltransferase 37 family. In terms of tissue distribution, expressed in roots, stems, leaves, flowers, siliques and seedlings.

Its subcellular location is the golgi apparatus. The protein localises to the golgi stack membrane. It functions in the pathway protein modification; protein glycosylation. In terms of biological role, may be involved in cell wall biosynthesis. May act as a fucosyltransferase. The sequence is that of Fucosyltransferase 3 (FUT3) from Arabidopsis thaliana (Mouse-ear cress).